The following is a 1025-amino-acid chain: Exportin-T (1025 aa).

Belongs to the exportin family.

Its subcellular location is the nucleus. The protein localises to the cytoplasm. Functionally, tRNA nucleus export receptor which facilitates tRNA translocation across the nuclear pore complex. Involved in pre-tRNA splicing, probably by affecting the interaction of pre-tRNA with splicing endonuclease. The chain is Exportin-T (LOS1) from Yarrowia lipolytica (strain CLIB 122 / E 150) (Yeast).